Here is a 227-residue protein sequence, read N- to C-terminus: Cytochrome c oxidase subunit 2 (227 aa).

Over 1–14 (MAYPVQLGFQDAAS) the chain is Mitochondrial intermembrane. A helical membrane pass occupies residues 15–45 (PIMEELLYFHDHTLMIMFLISSLVLYIISLM). The Mitochondrial matrix segment spans residues 46–59 (LTTELMHTNTMDAQ). The chain crosses the membrane as a helical span at residues 60–87 (EVETVWTILPAAILILIALPSLRILYMM). Residues 88–227 (DEITTPSLTL…HFEEWLLSML (140 aa)) are Mitochondrial intermembrane-facing. Cu cation is bound by residues H161, C196, E198, C200, H204, and M207. Mg(2+) is bound at residue E198.

It belongs to the cytochrome c oxidase subunit 2 family. In terms of assembly, component of the cytochrome c oxidase (complex IV, CIV), a multisubunit enzyme composed of 14 subunits. The complex is composed of a catalytic core of 3 subunits MT-CO1, MT-CO2 and MT-CO3, encoded in the mitochondrial DNA, and 11 supernumerary subunits COX4I, COX5A, COX5B, COX6A, COX6B, COX6C, COX7A, COX7B, COX7C, COX8 and NDUFA4, which are encoded in the nuclear genome. The complex exists as a monomer or a dimer and forms supercomplexes (SCs) in the inner mitochondrial membrane with NADH-ubiquinone oxidoreductase (complex I, CI) and ubiquinol-cytochrome c oxidoreductase (cytochrome b-c1 complex, complex III, CIII), resulting in different assemblies (supercomplex SCI(1)III(2)IV(1) and megacomplex MCI(2)III(2)IV(2)). Found in a complex with TMEM177, COA6, COX18, COX20, SCO1 and SCO2. Interacts with TMEM177 in a COX20-dependent manner. Interacts with COX20. Interacts with COX16. The cofactor is Cu cation.

The protein localises to the mitochondrion inner membrane. The enzyme catalyses 4 Fe(II)-[cytochrome c] + O2 + 8 H(+)(in) = 4 Fe(III)-[cytochrome c] + 2 H2O + 4 H(+)(out). Its function is as follows. Component of the cytochrome c oxidase, the last enzyme in the mitochondrial electron transport chain which drives oxidative phosphorylation. The respiratory chain contains 3 multisubunit complexes succinate dehydrogenase (complex II, CII), ubiquinol-cytochrome c oxidoreductase (cytochrome b-c1 complex, complex III, CIII) and cytochrome c oxidase (complex IV, CIV), that cooperate to transfer electrons derived from NADH and succinate to molecular oxygen, creating an electrochemical gradient over the inner membrane that drives transmembrane transport and the ATP synthase. Cytochrome c oxidase is the component of the respiratory chain that catalyzes the reduction of oxygen to water. Electrons originating from reduced cytochrome c in the intermembrane space (IMS) are transferred via the dinuclear copper A center (CU(A)) of subunit 2 and heme A of subunit 1 to the active site in subunit 1, a binuclear center (BNC) formed by heme A3 and copper B (CU(B)). The BNC reduces molecular oxygen to 2 water molecules using 4 electrons from cytochrome c in the IMS and 4 protons from the mitochondrial matrix. The polypeptide is Cytochrome c oxidase subunit 2 (MT-CO2) (Lemur catta (Ring-tailed lemur)).